The chain runs to 157 residues: Ribosomal RNA large subunit methyltransferase H (157 aa).

S-adenosyl-L-methionine contacts are provided by residues L73, G104, and 121 to 126 (LSPLTL).

This sequence belongs to the RNA methyltransferase RlmH family. In terms of assembly, homodimer.

The protein resides in the cytoplasm. The catalysed reaction is pseudouridine(1915) in 23S rRNA + S-adenosyl-L-methionine = N(3)-methylpseudouridine(1915) in 23S rRNA + S-adenosyl-L-homocysteine + H(+). Specifically methylates the pseudouridine at position 1915 (m3Psi1915) in 23S rRNA. The polypeptide is Ribosomal RNA large subunit methyltransferase H (Acidithiobacillus ferrooxidans (strain ATCC 23270 / DSM 14882 / CIP 104768 / NCIMB 8455) (Ferrobacillus ferrooxidans (strain ATCC 23270))).